The primary structure comprises 137 residues: Protein cornichon homolog 4 (137 aa).

Helical transmembrane passes span 8–28 (LISF…LVCL), 53–73 (FIVQ…FMTL), and 113–133 (LAYI…SALD).

It belongs to the cornichon family.

The protein resides in the membrane. The sequence is that of Protein cornichon homolog 4 from Arabidopsis thaliana (Mouse-ear cress).